Reading from the N-terminus, the 167-residue chain is Photosystem I assembly protein Ycf3 (167 aa).

3 TPR repeats span residues 35-68 (AFTYYRDGMSAQSEGEYAEALQNYYEAMRLEIDP), 72-105 (SYILYNIGLIHTSNGEHAKALEYYFQALERNPSL), and 120-153 (GEQAIQQGDPEASETWFDQAAEYWKQAILLAPSN).

Belongs to the Ycf3 family.

It is found in the plastid. Its subcellular location is the chloroplast thylakoid membrane. Functionally, essential for the assembly of the photosystem I (PSI) complex. May act as a chaperone-like factor to guide the assembly of the PSI subunits. This Marchantia polymorpha (Common liverwort) protein is Photosystem I assembly protein Ycf3.